Reading from the N-terminus, the 538-residue chain is Putative cysteine ligase BshC (538 aa).

Residues Lys-460–Leu-484 adopt a coiled-coil conformation.

Belongs to the BshC family.

Involved in bacillithiol (BSH) biosynthesis. May catalyze the last step of the pathway, the addition of cysteine to glucosamine malate (GlcN-Mal) to generate BSH. The sequence is that of Putative cysteine ligase BshC from Bacillus thuringiensis subsp. konkukian (strain 97-27).